A 483-amino-acid polypeptide reads, in one-letter code: Sphingomyelin phosphodiesterase 5 (483 aa).

Residues 1-20 are disordered; the sequence is MSLPDISRRRSPVPQEDWPL. The chain crosses the membrane as a helical span at residues 80–100; it reads VLLPLVVVGLPLALVGLALWL. E209 lines the Mg(2+) pocket. The Proton acceptor role is filled by H471.

The protein belongs to the neutral sphingomyelinase family. Mg(2+) is required as a cofactor. The cofactor is Mn(2+). In terms of tissue distribution, highly expressed in testis, pancreas, epididymis, and brain.

It localises to the mitochondrion inner membrane. Its subcellular location is the endoplasmic reticulum membrane. It catalyses the reaction a sphingomyelin + H2O = phosphocholine + an N-acylsphing-4-enine + H(+). The enzyme catalyses N-(hexadecanoyl)-sphing-4-enine-1-phosphocholine + H2O = N-hexadecanoylsphing-4-enine + phosphocholine + H(+). The protein operates within lipid metabolism; sphingolipid metabolism. With respect to regulation, activated by anionic phospholipids, specially cardiolipin and phosphatidylserine. In terms of biological role, catalyzes the hydrolysis of membrane sphingomyelin to form phosphorylcholine and ceramide. The polypeptide is Sphingomyelin phosphodiesterase 5 (Mus musculus (Mouse)).